The sequence spans 259 residues: Adenosylcobinamide-GDP ribazoletransferase (259 aa).

6 helical membrane passes run 27-47 (ITFL…ILYI), 51-71 (FSHL…NGLN), 100-120 (VGAG…LSLA), 124-144 (LYIG…SMMI), 175-195 (FLAI…VIVA), and 219-239 (VIGF…IIIA).

It belongs to the CobS family. Mg(2+) is required as a cofactor.

It localises to the cell membrane. It catalyses the reaction alpha-ribazole + adenosylcob(III)inamide-GDP = adenosylcob(III)alamin + GMP + H(+). The enzyme catalyses alpha-ribazole 5'-phosphate + adenosylcob(III)inamide-GDP = adenosylcob(III)alamin 5'-phosphate + GMP + H(+). It functions in the pathway cofactor biosynthesis; adenosylcobalamin biosynthesis; adenosylcobalamin from cob(II)yrinate a,c-diamide: step 7/7. Functionally, joins adenosylcobinamide-GDP and alpha-ribazole to generate adenosylcobalamin (Ado-cobalamin). Also synthesizes adenosylcobalamin 5'-phosphate from adenosylcobinamide-GDP and alpha-ribazole 5'-phosphate. In Thermoplasma volcanium (strain ATCC 51530 / DSM 4299 / JCM 9571 / NBRC 15438 / GSS1), this protein is Adenosylcobinamide-GDP ribazoletransferase.